The sequence spans 430 residues: Rosmarinate synthase (430 aa).

His152 (proton acceptor) is an active-site residue. Residues 178-210 (TPLPHFDRSSLSARNPPQPQFSHAEYQPPPTLE) form a disordered region. The active-site Proton acceptor is the Asp377.

This sequence belongs to the plant acyltransferase family.

It catalyses the reaction (2R)-3-(3,4-dihydroxyphenyl)lactate + (E)-caffeoyl-CoA = (R)-rosmarinate + CoA. Functionally, involved in the biosynthesis of rosmarinic acid, a compound with antiviral, antimicrobial and anti-inflammatory activities. Can use 4-coumaroyl- and caffeoyl-CoA as hydroxycinnamoyl donors and 4-Hydroxyphenyllactate and 3.4-Dihydroxyphenyllactate, but not shikimate or quinate, as hydroxycinnamoyl acceptors. Can also putatively catalyze amide formation with D-amino acids as acceptors. In Plectranthus scutellarioides (Coleus), this protein is Rosmarinate synthase (RAS).